Here is a 5875-residue protein sequence, read N- to C-terminus: Probable E3 ubiquitin-protein ligase DDB_G0283893 (5875 aa).

15 disordered regions span residues 17 to 64 (DNNN…QPPE), 164 to 185 (NNNNNNDNNSNNKTDDNNQSNN), 232 to 276 (DSNN…TTTS), 302 to 342 (PSFK…CGNG), 642 to 693 (TTTT…SPPI), 716 to 740 (SIRSSSNKVNEGTPKSSTTTTTTNA), 1081 to 1101 (ITPTNTTTTTTTTTPSTTSIP), 1291 to 1367 (DGWE…KEST), 1806 to 1851 (QESE…SSPP), 1952 to 1982 (KKPSSDQQHHSGGCHHSNHHHHHHHSRKDEV), 2008 to 2036 (EDEDELQYLSEDEKVVNGNENTGEEDDEE), 2109 to 2203 (KALK…TGSG), 2893 to 2930 (DSDDSDDEFPTVDENVTSSGLSTSAGGSGGGVAGTNDS), 3083 to 3119 (TSPSSSKGKSSSASASSSSSTTTATSTLPSNTQSGSN), and 3195 to 3214 (LLPPPSSSSNENVVDNDNTN). The span at 18–52 (NNNNNNNNNNNNNNNNNNNNNNNNNNNSNNNNNKN) shows a compositional bias: low complexity. Residues 237-249 (DNKENKKEDKESS) are compositionally biased toward basic and acidic residues. Low complexity-rich tracts occupy residues 250–276 (KPIASSPIPITTTNIEKPTIATTTTTS), 317–333 (TSTITTQPLPSSTITQP), and 642–656 (TTTTTATTTTTTTTT). Polar residues predominate over residues 657-669 (NESIPMETTRSST). The segment covering 670–693 (PIPIVNNNNNNNDSKSNSKKSPPI) has biased composition (low complexity). Over residues 716–725 (SIRSSSNKVN) the composition is skewed to polar residues. Residues 728-740 (TPKSSTTTTTTNA) are compositionally biased toward low complexity. Over residues 1297–1330 (FNDDDDEEEDEEEEEEMDEDDSENDEDEDSEESE) the composition is skewed to acidic residues. Positions 1300–1328 (DDDEEEDEEEEEEMDEDDSENDEDEDSEE) form a coiled coil. 2 stretches are compositionally biased toward low complexity: residues 1347–1363 (TTTTTAAAATTTATATT) and 1838–1851 (SNSSPALTASSSPP). Residues 1963–1977 (GGCHHSNHHHHHHHS) are compositionally biased toward basic residues. Residues 2042 to 2113 (KVCTYTFTKN…KGNPCKALKP (72 aa)) form a UBR-type zinc finger. Low complexity-rich tracts occupy residues 2118–2168 (PPKQ…TNTN) and 2178–2203 (SSSSSNSSPSFNNNNNNNNNGTTGSG). Residues 2893–2903 (DSDDSDDEFPT) show a composition bias toward acidic residues. Positions 2908 to 2917 (VTSSGLSTSA) are enriched in low complexity. The span at 3201–3211 (SSSNENVVDND) shows a compositional bias: low complexity. The segment at 3226-3280 (EVLFSCDLCNINPITGKRWNCSNCGDFDLCNQCYQNPEKDHPKDHIFKEFIIDEP) adopts a ZZ-type zinc-finger fold. Positions 3231, 3234, 3246, 3249, 3255, 3258, 3266, and 3270 each coordinate Zn(2+). Disordered regions lie at residues 3282 to 3312 (KDGDEKESTNEPPQQQKQQDQQLQQDLQDDS), 3326 to 3359 (LNNNNNNNNNNESMDTSTLTTTTTTTNKTTPTTN), and 3754 to 3776 (SSTSQDTQQESSNNNNNNNSNDI). Low complexity-rich tracts occupy residues 3295–3307 (QQQKQQDQQLQQD) and 3327–3358 (NNNNNNNNNNESMDTSTLTTTTTTTNKTTPTT). In terms of domain architecture, UIM spans 3313–3332 (EYDEELKIAISMSLNNNNNN). Polar residues predominate over residues 3754 to 3763 (SSTSQDTQQE). A compositionally biased stretch (low complexity) spans 3764-3774 (SSNNNNNNNSN). Residues 4118 to 4146 (IENQEDHKRAIQTIEKESENAHKKYQRLI) are a coiled coil. A compositionally biased stretch (low complexity) spans 4182–4222 (NTSTNSTGSNNQSINSSSGNISTNSSSSSSSSFGISNQSSS). 3 disordered regions span residues 4182–4237 (NTST…GGVI), 4295–4323 (FISGGGQPSSNDKQQQQQQQQQQSSRQCP), and 4616–4671 (KILS…FDND). Residues 4223–4236 (GNGGGGVGSGGGGV) show a composition bias toward gly residues. Low complexity predominate over residues 4308–4317 (QQQQQQQQQQ). Positions 4585–4618 (QIQQQIALQQQQIQQQIQQQQQQLNESVSGLKIL) form a coiled coil. Composition is skewed to low complexity over residues 4619 to 4635 (SPSSSSSSPSGVGATGS) and 4645 to 4659 (SSGSSVSGSGSISSS). The tract at residues 5357 to 5870 (PALPFVLVLL…EYLLKLYKSV (514 aa)) is UBR4 E3 catalytic module. The segment at 5476–5620 (GFTCMVCREG…WVNLNNISRV (145 aa)) adopts a HemiRING-type zinc-finger fold. Zn(2+)-binding residues include Cys5479, Cys5482, His5554, and Cys5557. The region spanning 5623-5870 (PKFRILSHDL…EYLLKLYKSV (248 aa)) is the UZI domain. Residues 5819–5846 (QVDVKELLNCFENELKEFQDEMEFFDDE) are a coiled coil.

The protein belongs to the UBR4 family.

It functions in the pathway protein modification; protein ubiquitination. Its function is as follows. Probable E3 ubiquitin-protein ligase. The sequence is that of Probable E3 ubiquitin-protein ligase DDB_G0283893 from Dictyostelium discoideum (Social amoeba).